The sequence spans 160 residues: Transcription elongation factor GreA (160 aa).

Residues 1–72 (MAEKTYPMTQ…QIQILETKIR (72 aa)) are a coiled coil.

The protein belongs to the GreA/GreB family.

Necessary for efficient RNA polymerase transcription elongation past template-encoded arresting sites. The arresting sites in DNA have the property of trapping a certain fraction of elongating RNA polymerases that pass through, resulting in locked ternary complexes. Cleavage of the nascent transcript by cleavage factors such as GreA or GreB allows the resumption of elongation from the new 3'terminus. GreA releases sequences of 2 to 3 nucleotides. The sequence is that of Transcription elongation factor GreA from Streptococcus agalactiae serotype Ia (strain ATCC 27591 / A909 / CDC SS700).